Reading from the N-terminus, the 427-residue chain is Serine hydroxymethyltransferase (427 aa).

(6S)-5,6,7,8-tetrahydrofolate is bound by residues Leu-122 and 126-128 (GHL). Lys-231 is modified (N6-(pyridoxal phosphate)lysine).

It belongs to the SHMT family. Homodimer. Pyridoxal 5'-phosphate is required as a cofactor.

The protein resides in the cytoplasm. The catalysed reaction is (6R)-5,10-methylene-5,6,7,8-tetrahydrofolate + glycine + H2O = (6S)-5,6,7,8-tetrahydrofolate + L-serine. Its pathway is one-carbon metabolism; tetrahydrofolate interconversion. It participates in amino-acid biosynthesis; glycine biosynthesis; glycine from L-serine: step 1/1. In terms of biological role, catalyzes the reversible interconversion of serine and glycine with tetrahydrofolate (THF) serving as the one-carbon carrier. This reaction serves as the major source of one-carbon groups required for the biosynthesis of purines, thymidylate, methionine, and other important biomolecules. Also exhibits THF-independent aldolase activity toward beta-hydroxyamino acids, producing glycine and aldehydes, via a retro-aldol mechanism. In Acidobacterium capsulatum (strain ATCC 51196 / DSM 11244 / BCRC 80197 / JCM 7670 / NBRC 15755 / NCIMB 13165 / 161), this protein is Serine hydroxymethyltransferase.